Here is a 291-residue protein sequence, read N- to C-terminus: Insulin-like growth factor-binding protein 3 (291 aa).

The N-terminal stretch at 1 to 27 is a signal peptide; sequence MQRARPTLWAAALTLLVLLRGPPVARA. Residues 28-134 are IGF-binding; the sequence is GASSAGLGPV…AYLLPAPPAP (107 aa). The IGFBP N-terminal domain occupies 36-117; it reads PVVRCEPCDA…LDGRGLCVNA (82 aa). Disulfide bonds link cysteine 40–cysteine 67, cysteine 43–cysteine 69, cysteine 51–cysteine 70, cysteine 58–cysteine 73, cysteine 81–cysteine 94, and cysteine 88–cysteine 114. N-linked (GlcNAc...) (complex) asparagine glycosylation is found at asparagine 116 and asparagine 136. 2 disordered regions span residues 130 to 162 and 189 to 211; these read APPA…RVSD and DYES…TEYG. The span at 146 to 156 shows a compositional bias: low complexity; that stretch reads AGSVESPSVSS. Serine 148 is subject to Phosphoserine; by FAM20C. The span at 191–202 shows a compositional bias: polar residues; that stretch reads ESQSTDTQNFSS. Serine 194 carries the phosphoserine; by CK2 modification. A glycan (N-linked (GlcNAc...) (complex) asparagine) is linked at asparagine 199. A Phosphoserine; by FAM20C modification is found at serine 201. Serine 202 bears the Phosphoserine; by CK2 mark. Residues 210-285 enclose the Thyroglobulin type-1 domain; it reads YGPCRREMED…TTKGKEDVHC (76 aa). 3 cysteine pairs are disulfide-bonded: cysteine 213/cysteine 240, cysteine 251/cysteine 262, and cysteine 264/cysteine 285.

Interacts with XLKD1. Binds IGF2 more than IGF1. Forms a ternary complex of about 140 to 150 kDa with IGF1 or IGF2 and a 85 kDa glycoprotein (ALS). Interacts with humanin; humanin competes with importin KPNB1 for binding to IGFBP3, blocking IGFBP3 nuclear import and IGFBP3-mediated apoptosis. Interacts with TMEM219. Interacts with RXRA; this interaction modulates the transcriptional activity of RXRA. Interacts with LRP1; this interaction mediates cell growth inhibition independent of IGF1. Post-translationally, phosphorylated by FAM20C in the extracellular medium. Phosphorylated by CK2; resulting in decreased nuclear localization. As to expression, expressed by most tissues. Present in plasma.

The protein resides in the secreted. It localises to the nucleus. Functionally, multifunctional protein that plays a critical role in regulating the availability of IGFs such as IGF1 and IGF2 to their receptors and thereby regulates IGF-mediated cellular processes including proliferation, differentiation, and apoptosis in a cell-type specific manner. Also exhibits IGF-independent antiproliferative and apoptotic effects mediated by its receptor TMEM219/IGFBP-3R. Inhibits the positive effect of humanin on insulin sensitivity. Promotes testicular germ cell apoptosis. Acts via LRP-1/alpha2M receptor, also known as TGF-beta type V receptor, to mediate cell growth inhibition independent of IGF1. Mechanistically, induces serine-specific dephosphorylation of IRS1 or IRS2 upon ligation to its receptor, leading to the inhibitory cascade. In the nucleus, interacts with transcription factors such as retinoid X receptor-alpha/RXRA to regulate transcriptional signaling and apoptosis. In Homo sapiens (Human), this protein is Insulin-like growth factor-binding protein 3 (IGFBP3).